A 998-amino-acid chain; its full sequence is Kinesin-like protein KIF19 (998 aa).

The Kinesin motor domain occupies 11–346 (QLMVALRVRP…LTYAGRAKNI (336 aa)). Position 104–111 (104–111 (GPTGCGKT)) interacts with ATP. Coiled coils occupy residues 360–391 (HIAQ…RGQA) and 424–452 (EQLA…EVQI). Residues 482–494 (ECYAKDDSEKDSD) show a composition bias toward basic and acidic residues. Residues 482–503 (ECYAKDDSEKDSDTGDDQPDIL) are disordered. Residues 507–552 (EVAAARESIAALVDEQKQLRKQKLALEQRCRELRARGRRLEETLPR) adopt a coiled-coil conformation. Polar residues-rich tracts occupy residues 662-676 (SSLP…SLTP), 684-697 (KTLS…QNSA), 746-761 (SLGS…SENL), and 836-852 (TLQH…STGE). Disordered stretches follow at residues 662-706 (SSLP…TESE), 746-765 (SLGS…SEIP), 794-911 (GTEG…THLL), and 948-998 (KLPP…SRHN). Basic and acidic residues predominate over residues 989 to 998 (HGKDGCSRHN).

Belongs to the TRAFAC class myosin-kinesin ATPase superfamily. Kinesin family.

The protein resides in the cytoplasm. It is found in the cytoskeleton. Its subcellular location is the cell projection. It localises to the cilium. Functionally, plus end-directed microtubule-dependent motor protein that regulates the length of motile cilia by mediating depolymerization of microtubules at ciliary tips. The sequence is that of Kinesin-like protein KIF19 (KIF19) from Homo sapiens (Human).